Reading from the N-terminus, the 503-residue chain is Probable cytosol aminopeptidase (503 aa).

Mn(2+) contacts are provided by lysine 272 and aspartate 277. The active site involves lysine 284. Residues aspartate 295, aspartate 354, and glutamate 356 each contribute to the Mn(2+) site. Arginine 358 is a catalytic residue.

Belongs to the peptidase M17 family. Mn(2+) is required as a cofactor.

The protein resides in the cytoplasm. It catalyses the reaction Release of an N-terminal amino acid, Xaa-|-Yaa-, in which Xaa is preferably Leu, but may be other amino acids including Pro although not Arg or Lys, and Yaa may be Pro. Amino acid amides and methyl esters are also readily hydrolyzed, but rates on arylamides are exceedingly low.. It carries out the reaction Release of an N-terminal amino acid, preferentially leucine, but not glutamic or aspartic acids.. In terms of biological role, presumably involved in the processing and regular turnover of intracellular proteins. Catalyzes the removal of unsubstituted N-terminal amino acids from various peptides. The polypeptide is Probable cytosol aminopeptidase (Chlorobium limicola (strain DSM 245 / NBRC 103803 / 6330)).